A 356-amino-acid chain; its full sequence is Heat-inducible transcription repressor HrcA (356 aa).

The protein belongs to the HrcA family.

Functionally, negative regulator of class I heat shock genes (grpE-dnaK-dnaJ and groELS operons). Prevents heat-shock induction of these operons. The chain is Heat-inducible transcription repressor HrcA from Chlorobaculum parvum (strain DSM 263 / NCIMB 8327) (Chlorobium vibrioforme subsp. thiosulfatophilum).